The sequence spans 244 residues: RNA transcription, translation and transport factor protein (244 aa).

N6-acetyllysine is present on residues K20, K62, and K98.

This sequence belongs to the RTRAF family. Homodimer. Interacts with FAM98A (via N- and C-terminus). Interacts with NIN; which may prevent phosphorylation of NIN. Interacts with POLR2A. Component of a tRNA-splicing ligase complex.

Its subcellular location is the nucleus. The protein resides in the cytoplasm. The protein localises to the cytosol. It is found in the perinuclear region. It localises to the cytoskeleton. Its subcellular location is the microtubule organizing center. The protein resides in the centrosome. Its function is as follows. RNA-binding protein involved in modulation of mRNA transcription by Polymerase II. Component of the tRNA-splicing ligase complex and is required for tRNA ligation. May be required for RNA transport. The protein is RNA transcription, translation and transport factor protein of Mus musculus (Mouse).